The primary structure comprises 109 residues: Large ribosomal subunit protein uL22 (109 aa).

This sequence belongs to the universal ribosomal protein uL22 family. Part of the 50S ribosomal subunit.

Functionally, this protein binds specifically to 23S rRNA; its binding is stimulated by other ribosomal proteins, e.g. L4, L17, and L20. It is important during the early stages of 50S assembly. It makes multiple contacts with different domains of the 23S rRNA in the assembled 50S subunit and ribosome. The globular domain of the protein is located near the polypeptide exit tunnel on the outside of the subunit, while an extended beta-hairpin is found that lines the wall of the exit tunnel in the center of the 70S ribosome. The polypeptide is Large ribosomal subunit protein uL22 (Paraburkholderia phymatum (strain DSM 17167 / CIP 108236 / LMG 21445 / STM815) (Burkholderia phymatum)).